A 446-amino-acid polypeptide reads, in one-letter code: Methylenetetrahydrofolate--tRNA-(uracil-5-)-methyltransferase TrmFO (446 aa).

Glycine 11–glycine 16 provides a ligand contact to FAD.

The protein belongs to the MnmG family. TrmFO subfamily. The cofactor is FAD.

Its subcellular location is the cytoplasm. It carries out the reaction uridine(54) in tRNA + (6R)-5,10-methylene-5,6,7,8-tetrahydrofolate + NADH + H(+) = 5-methyluridine(54) in tRNA + (6S)-5,6,7,8-tetrahydrofolate + NAD(+). It catalyses the reaction uridine(54) in tRNA + (6R)-5,10-methylene-5,6,7,8-tetrahydrofolate + NADPH + H(+) = 5-methyluridine(54) in tRNA + (6S)-5,6,7,8-tetrahydrofolate + NADP(+). Functionally, catalyzes the folate-dependent formation of 5-methyl-uridine at position 54 (M-5-U54) in all tRNAs. In Oleidesulfovibrio alaskensis (strain ATCC BAA-1058 / DSM 17464 / G20) (Desulfovibrio alaskensis), this protein is Methylenetetrahydrofolate--tRNA-(uracil-5-)-methyltransferase TrmFO.